The sequence spans 864 residues: MHERYVPADVEAAAQSDWRAADAYRSKEDANRKKFYCVSMLPYPSGKLHMGHVRNYTINDVMYRYLRMNGYNTLMPMGWDAFGMPAENAAMANGVPPAQWTYENIAYMKKQMQSMGLAIDWSREVTTCKPDYYKWNQWLFLKMLEKGVAYKKTGTVNWDPVDQTVLANEQVIDGRGWRSGALVEKREIPMYYMRITQYADELLNDLDGLGWPERVKVMQHNWIGKSFGVNFGFPYELDGEKKLLRVFTTRADTIMGVTFCAIAAEHPLAARLARDKPALQAFIDECKRGGVAEADIATMEKKGVATGFSVSHPLTGEPVEVWIGNYVLMSYGEGAVMGVPAHDERDFAFAKKYGLPIRQVIAVEGETYSTDAWQEWYGDKTRAVCVNSGKYDGLAHDAAVDAIAAELKAGGLGDKQITYRLRDWGISRQRYWGTPIPIIHCPSCGDVPVPEQDLPVVLPEDLVPDGTGNPLAKSDAFLNCTCPKCGAAAKRETDTMDTFVDSAWYFSRYAAPDAQTMVDARTDYWMPMDQYIGGIEHAILHLLYSRFWAKVMRDLGLVAFGEPAKNLLTQGMVLNETFYREDAAGKKTWYNPADVTVSFDDKGRPVGAVLKSDGQPVELGGIEKMSKSKNNGVDPQMLIDHYGADTARLFTMFAAPPEQQLEWSGAGVDGASRFLRRVWAFGFANREALAVRAPFDAAQLAEADKTLRREIHGVLKQADFDYQRLQYNTVVSAAMKMLNAIEGAKGATPAVLRETYGVLLRVLYPVVPHVTFELWKALGYADEFGPLLDAPWPKVDEAALEQAEIELVLQVNGKVRGALKVAKDASREAIEAAAVADGMFAKFAEGRPAKKIIVVPGRLVNVVV.

The 'HIGH' region signature appears at 42–52 (PYPSGKLHMGH). The short motif at 624–628 (KMSKS) is the 'KMSKS' region element. Residue Lys627 coordinates ATP.

Belongs to the class-I aminoacyl-tRNA synthetase family.

It is found in the cytoplasm. The enzyme catalyses tRNA(Leu) + L-leucine + ATP = L-leucyl-tRNA(Leu) + AMP + diphosphate. In Burkholderia pseudomallei (strain 1106a), this protein is Leucine--tRNA ligase.